The primary structure comprises 608 residues: RAS guanyl-releasing protein 2 (608 aa).

In terms of domain architecture, N-terminal Ras-GEF spans 4-126; it reads TLDLDKGCTV…SLIDIESVPT (123 aa). Ser-116, Ser-117, and Ser-147 each carry phosphoserine. The 234-residue stretch at 154-387 folds into the Ras-GEF domain; the sequence is EPMELAEHLT…YQLSLQREPR (234 aa). Residues 382–405 are disordered; the sequence is LQREPRSKSSPTSPTSCTPPPRPP. EF-hand domains are found at residues 426 to 461 and 463 to 490; these read HIEKMVESVFRNFDVDGDGHISQEEFQIIRGNFPYL and AFGDLDQNQDGCISREEMISYFLRSSSV. Residues Asp-439, Asp-441, Asp-443, His-445, Glu-450, Asp-468, Asn-470, Asp-472, Cys-474, and Glu-479 each contribute to the Ca(2+) site. A Phorbol-ester/DAG-type zinc finger spans residues 498 to 548; it reads VHNLQESNSLRPVACRHCKALILGIYKQGLKCRACGVNCHKQCKDRLSVEC. Residues Ser-554 and Ser-575 each carry the phosphoserine modification. The interval 555 to 596 is disordered; it reads VSLEGSAPSPSPTHTHHRAFSFSLPRPGRRSSRPPEIREEEV.

This sequence belongs to the RASGRP family. In terms of assembly, forms a signaling complex with RAP1 and BRAF. Interacts with F-actin. Interacts with RAP1. As to expression, expressed in striatal neurons (at protein level). Expressed in the hematopoietic system. Detected in olfactory structures and deep cortical layers of brain.

The protein localises to the cytoplasm. It localises to the cytosol. It is found in the cell membrane. Its subcellular location is the synapse. The protein resides in the synaptosome. The protein localises to the cell projection. It localises to the ruffle membrane. Functionally, functions as a calcium- and DAG-regulated nucleotide exchange factor specifically activating Rap through the exchange of bound GDP for GTP. May also activate other GTPases such as RRAS, RRAS2, NRAS, KRAS but not HRAS. Functions in aggregation of platelets and adhesion of T-lymphocytes and neutrophils probably through inside-out integrin activation. May function in the muscarinic acetylcholine receptor M1/CHRM1 signaling pathway. This Rattus norvegicus (Rat) protein is RAS guanyl-releasing protein 2 (Rasgrp2).